The following is a 176-amino-acid chain: Ribosome rescue factor SmrB (176 aa).

Residues L93–D168 form the Smr domain.

It belongs to the SmrB family. In terms of assembly, associates with collided ribosomes, but not with correctly translating polysomes.

Functionally, acts as a ribosome collision sensor. Detects stalled/collided disomes (pairs of ribosomes where the leading ribosome is stalled and a second ribosome has collided with it) and endonucleolytically cleaves mRNA at the 5' boundary of the stalled ribosome. Stalled/collided disomes form a new interface (primarily via the 30S subunits) that binds SmrB. Cleaved mRNA becomes available for tmRNA ligation, leading to ribosomal subunit dissociation and rescue of stalled ribosomes. The chain is Ribosome rescue factor SmrB from Shewanella sp. (strain ANA-3).